Here is a 224-residue protein sequence, read N- to C-terminus: MSVKEWPVSERPREKLQTQGAEYLSDAELLAILLGSGSGGQDVVSFARRLLSDFGGVGALLTATPEQLLACNGIGPARVNQLRVVLELSRRYLKWQLERSDGFTEPTMVKDYLTSQLRHQGREVFAILLLDSQHRLLRYEELFQGTINAAPVYPREVIKLVMQYNAAAVILAHNHPSGVAEPSQADQRVTERVKKALTLIDVALLDHFVVGAGDPISFAERGLL.

The MPN domain maps to 102 to 224 (GFTEPTMVKD…PISFAERGLL (123 aa)). Residues histidine 173, histidine 175, and aspartate 186 each coordinate Zn(2+). Positions 173–186 (HNHPSGVAEPSQAD) match the JAMM motif motif.

Belongs to the UPF0758 family.

The chain is UPF0758 protein IL0240 from Idiomarina loihiensis (strain ATCC BAA-735 / DSM 15497 / L2-TR).